Here is a 501-residue protein sequence, read N- to C-terminus: Glycerol kinase (501 aa).

Position 11 (T11) interacts with ADP. The ATP site is built by T11, T12, and S13. T11 lines the sn-glycerol 3-phosphate pocket. R15 contacts ADP. R81, E82, Y133, and D242 together coordinate sn-glycerol 3-phosphate. Positions 81, 82, 133, 242, and 243 each coordinate glycerol. Residues T264 and G307 each coordinate ADP. 4 residues coordinate ATP: T264, G307, Q311, and G409. G409 and N413 together coordinate ADP.

Belongs to the FGGY kinase family.

The enzyme catalyses glycerol + ATP = sn-glycerol 3-phosphate + ADP + H(+). Its pathway is polyol metabolism; glycerol degradation via glycerol kinase pathway; sn-glycerol 3-phosphate from glycerol: step 1/1. Its activity is regulated as follows. Inhibited by fructose 1,6-bisphosphate (FBP). Its function is as follows. Key enzyme in the regulation of glycerol uptake and metabolism. Catalyzes the phosphorylation of glycerol to yield sn-glycerol 3-phosphate. The polypeptide is Glycerol kinase (Borreliella burgdorferi (strain ATCC 35210 / DSM 4680 / CIP 102532 / B31) (Borrelia burgdorferi)).